Consider the following 150-residue polypeptide: Large ribosomal subunit protein uL13 (150 aa).

It belongs to the universal ribosomal protein uL13 family. Part of the 50S ribosomal subunit.

This protein is one of the early assembly proteins of the 50S ribosomal subunit, although it is not seen to bind rRNA by itself. It is important during the early stages of 50S assembly. In Sulfurihydrogenibium sp. (strain YO3AOP1), this protein is Large ribosomal subunit protein uL13.